Consider the following 205-residue polypeptide: Meiotic nuclear division protein 1 homolog (205 aa).

A coiled-coil region spans residues Leu-79–Cys-147.

Belongs to the MND1 family.

The protein localises to the nucleus. In terms of biological role, required for proper homologous chromosome pairing and efficient cross-over and intragenic recombination during meiosis. Stimulates both dmc1- and rad51-mediated homologous strand assimilation, which is required for the resolution of meiotic double-strand breaks. The sequence is that of Meiotic nuclear division protein 1 homolog from Xenopus laevis (African clawed frog).